Reading from the N-terminus, the 127-residue chain is Large ribosomal subunit protein bL19 (127 aa).

This sequence belongs to the bacterial ribosomal protein bL19 family.

Its function is as follows. This protein is located at the 30S-50S ribosomal subunit interface and may play a role in the structure and function of the aminoacyl-tRNA binding site. This chain is Large ribosomal subunit protein bL19, found in Trichodesmium erythraeum (strain IMS101).